The primary structure comprises 780 residues: 5-methyltetrahydropteroyltriglutamate--homocysteine methyltransferase (780 aa).

Residues 15–18 (RELK) and lysine 114 each bind 5-methyltetrahydropteroyltri-L-glutamate. L-homocysteine contacts are provided by residues 457–459 (IGS) and glutamate 510. L-methionine is bound by residues 457–459 (IGS) and glutamate 510. 5-methyltetrahydropteroyltri-L-glutamate contacts are provided by residues 541–542 (RC) and tryptophan 587. Residue aspartate 625 coordinates L-homocysteine. Aspartate 625 serves as a coordination point for L-methionine. Glutamate 631 serves as a coordination point for 5-methyltetrahydropteroyltri-L-glutamate. The Zn(2+) site is built by histidine 667, cysteine 669, and glutamate 691. Histidine 720 functions as the Proton donor in the catalytic mechanism. Cysteine 752 serves as a coordination point for Zn(2+).

The protein belongs to the vitamin-B12 independent methionine synthase family. Requires Zn(2+) as cofactor.

The enzyme catalyses 5-methyltetrahydropteroyltri-L-glutamate + L-homocysteine = tetrahydropteroyltri-L-glutamate + L-methionine. It functions in the pathway amino-acid biosynthesis; L-methionine biosynthesis via de novo pathway; L-methionine from L-homocysteine (MetE route): step 1/1. Catalyzes the transfer of a methyl group from 5-methyltetrahydrofolate to homocysteine resulting in methionine formation. The protein is 5-methyltetrahydropteroyltriglutamate--homocysteine methyltransferase of Nitratidesulfovibrio vulgaris (strain DSM 19637 / Miyazaki F) (Desulfovibrio vulgaris).